The primary structure comprises 441 residues: Tubulin beta-1 chain (441 aa).

Gln11, Glu69, Ser138, Gly142, Thr143, Gly144, Asn204, and Asn226 together coordinate GTP. Glu69 contacts Mg(2+).

Belongs to the tubulin family. In terms of assembly, dimer of alpha and beta chains. A typical microtubule is a hollow water-filled tube with an outer diameter of 25 nm and an inner diameter of 15 nM. Alpha-beta heterodimers associate head-to-tail to form protofilaments running lengthwise along the microtubule wall with the beta-tubulin subunit facing the microtubule plus end conferring a structural polarity. Microtubules usually have 13 protofilaments but different protofilament numbers can be found in some organisms and specialized cells. It depends on Mg(2+) as a cofactor. As to expression, expressed primarily in touch receptor neurons.

The protein localises to the cytoplasm. It localises to the cytoskeleton. In terms of biological role, tubulin is the major constituent of microtubules, a cylinder consisting of laterally associated linear protofilaments composed of alpha- and beta-tubulin heterodimers. Microtubules grow by the addition of GTP-tubulin dimers to the microtubule end, where a stabilizing cap forms. Below the cap, tubulin dimers are in GDP-bound state, owing to GTPase activity of alpha-tubulin. Plays a role in mechanosensory transduction (touch sensitivity). Its function is as follows. Mec-7 beta-tubulin is required for the production of 15-protofilament microtubules. The sequence is that of Tubulin beta-1 chain (mec-7) from Caenorhabditis briggsae.